A 271-amino-acid polypeptide reads, in one-letter code: Formamidopyrimidine-DNA glycosylase (271 aa).

Residue P2 is the Schiff-base intermediate with DNA of the active site. E3 (proton donor) is an active-site residue. The active-site Proton donor; for beta-elimination activity is K58. The DNA site is built by H91, R110, and R152. The segment at 237-271 (NVYGRGGKACKKCRKPLTEKKLGQRTTVYCTHCQK) adopts an FPG-type zinc-finger fold. R261 (proton donor; for delta-elimination activity) is an active-site residue.

Belongs to the FPG family. As to quaternary structure, monomer. It depends on Zn(2+) as a cofactor.

The catalysed reaction is Hydrolysis of DNA containing ring-opened 7-methylguanine residues, releasing 2,6-diamino-4-hydroxy-5-(N-methyl)formamidopyrimidine.. The enzyme catalyses 2'-deoxyribonucleotide-(2'-deoxyribose 5'-phosphate)-2'-deoxyribonucleotide-DNA = a 3'-end 2'-deoxyribonucleotide-(2,3-dehydro-2,3-deoxyribose 5'-phosphate)-DNA + a 5'-end 5'-phospho-2'-deoxyribonucleoside-DNA + H(+). In terms of biological role, involved in base excision repair of DNA damaged by oxidation or by mutagenic agents. Acts as a DNA glycosylase that recognizes and removes damaged bases. Has a preference for oxidized purines, such as 7,8-dihydro-8-oxoguanine (8-oxoG). Has AP (apurinic/apyrimidinic) lyase activity and introduces nicks in the DNA strand. Cleaves the DNA backbone by beta-delta elimination to generate a single-strand break at the site of the removed base with both 3'- and 5'-phosphates. The polypeptide is Formamidopyrimidine-DNA glycosylase (Saccharophagus degradans (strain 2-40 / ATCC 43961 / DSM 17024)).